Reading from the N-terminus, the 344-residue chain is Photosystem II protein D1 (344 aa).

N-acetylthreonine is present on Thr-2. Thr-2 is subject to Phosphothreonine. Helical transmembrane passes span 29–46 (YIGWFGCLMIPTLLTATS), 118–133 (HFFLGICAYMGREWEL), and 142–156 (WIAVAYSAPVAAATA). Chlorophyll a is bound at residue His-118. Tyr-126 lines the pheophytin a pocket. [CaMn4O5] cluster is bound by residues Asp-170 and Glu-189. The chain crosses the membrane as a helical span at residues 197 to 218 (FHMLGVAGVFGGSLFSAMHGSL). His-198 contributes to the chlorophyll a binding site. A quinone-binding positions include His-215 and 264–265 (SF). His-215 contributes to the Fe cation binding site. His-272 contributes to the Fe cation binding site. The helical transmembrane segment at 274–288 (FLAAWPVIGIWFTAL) threads the bilayer. [CaMn4O5] cluster contacts are provided by His-332, Glu-333, Asp-342, and Ala-344.

It belongs to the reaction center PufL/M/PsbA/D family. In terms of assembly, PSII is composed of 1 copy each of membrane proteins PsbA, PsbB, PsbC, PsbD, PsbE, PsbF, PsbH, PsbI, PsbJ, PsbK, PsbL, PsbM, PsbT, PsbX, PsbY, PsbZ, Psb30/Ycf12, at least 3 peripheral proteins of the oxygen-evolving complex and a large number of cofactors. It forms dimeric complexes. It depends on The D1/D2 heterodimer binds P680, chlorophylls that are the primary electron donor of PSII, and subsequent electron acceptors. It shares a non-heme iron and each subunit binds pheophytin, quinone, additional chlorophylls, carotenoids and lipids. D1 provides most of the ligands for the Mn4-Ca-O5 cluster of the oxygen-evolving complex (OEC). There is also a Cl(-1) ion associated with D1 and D2, which is required for oxygen evolution. The PSII complex binds additional chlorophylls, carotenoids and specific lipids. as a cofactor. Post-translationally, tyr-161 forms a radical intermediate that is referred to as redox-active TyrZ, YZ or Y-Z.

It localises to the plastid. It is found in the chloroplast thylakoid membrane. It catalyses the reaction 2 a plastoquinone + 4 hnu + 2 H2O = 2 a plastoquinol + O2. In terms of biological role, photosystem II (PSII) is a light-driven water:plastoquinone oxidoreductase that uses light energy to abstract electrons from H(2)O, generating O(2) and a proton gradient subsequently used for ATP formation. It consists of a core antenna complex that captures photons, and an electron transfer chain that converts photonic excitation into a charge separation. The D1/D2 (PsbA/PsbD) reaction center heterodimer binds P680, the primary electron donor of PSII as well as several subsequent electron acceptors. The polypeptide is Photosystem II protein D1 (Pleurastrum terricola (Filamentous green alga)).